The primary structure comprises 180 residues: MPLLNSVTTPYAEALLQVVNENSQTEEMVSEVKQLLELINNSPELEKALSSPILETDAKKKIINEIFSKKVNSSLLNFLKLLADRQRIGILTSILDRFLEIYRENSNIALATVTSAVELTDEQKGLITKKIINIAGTEKLELVTKIDPSLIGGFVASVGSKVIDASLASQIRKLGLSLSK.

It belongs to the ATPase delta chain family. F-type ATPases have 2 components, F(1) - the catalytic core - and F(0) - the membrane proton channel. F(1) has five subunits: alpha(3), beta(3), gamma(1), delta(1), epsilon(1). CF(0) has four main subunits: a(1), b(1), b'(1) and c(10-14). The alpha and beta chains form an alternating ring which encloses part of the gamma chain. F(1) is attached to F(0) by a central stalk formed by the gamma and epsilon chains, while a peripheral stalk is formed by the delta, b and b' chains.

The protein resides in the cellular thylakoid membrane. Functionally, f(1)F(0) ATP synthase produces ATP from ADP in the presence of a proton or sodium gradient. F-type ATPases consist of two structural domains, F(1) containing the extramembraneous catalytic core and F(0) containing the membrane proton channel, linked together by a central stalk and a peripheral stalk. During catalysis, ATP synthesis in the catalytic domain of F(1) is coupled via a rotary mechanism of the central stalk subunits to proton translocation. This protein is part of the stalk that links CF(0) to CF(1). It either transmits conformational changes from CF(0) to CF(1) or is implicated in proton conduction. This chain is ATP synthase subunit delta, found in Prochlorococcus marinus (strain MIT 9301).